Consider the following 185-residue polypeptide: Large ribosomal subunit protein uL5 (185 aa).

This sequence belongs to the universal ribosomal protein uL5 family. Part of the 50S ribosomal subunit; part of the 5S rRNA/L5/L18/L25 subcomplex. Contacts the 5S rRNA and the P site tRNA. Forms a bridge to the 30S subunit in the 70S ribosome.

In terms of biological role, this is one of the proteins that bind and probably mediate the attachment of the 5S RNA into the large ribosomal subunit, where it forms part of the central protuberance. In the 70S ribosome it contacts protein S13 of the 30S subunit (bridge B1b), connecting the 2 subunits; this bridge is implicated in subunit movement. Contacts the P site tRNA; the 5S rRNA and some of its associated proteins might help stabilize positioning of ribosome-bound tRNAs. This is Large ribosomal subunit protein uL5 from Rhizobium leguminosarum bv. trifolii (strain WSM2304).